The sequence spans 488 residues: N-succinylglutamate 5-semialdehyde dehydrogenase (488 aa).

221 to 226 (GSSRTG) is an NAD(+) binding site. Residues Glu-244 and Cys-278 contribute to the active site.

The protein belongs to the aldehyde dehydrogenase family. AstD subfamily.

It catalyses the reaction N-succinyl-L-glutamate 5-semialdehyde + NAD(+) + H2O = N-succinyl-L-glutamate + NADH + 2 H(+). The protein operates within amino-acid degradation; L-arginine degradation via AST pathway; L-glutamate and succinate from L-arginine: step 4/5. In terms of biological role, catalyzes the NAD-dependent reduction of succinylglutamate semialdehyde into succinylglutamate. The sequence is that of N-succinylglutamate 5-semialdehyde dehydrogenase from Pseudomonas fluorescens (strain SBW25).